Consider the following 298-residue polypeptide: tRNA dimethylallyltransferase (298 aa).

10 to 17 (GATATGKS) provides a ligand contact to ATP. 12–17 (TATGKS) contacts substrate. Residues 35–38 (DSRQ) form an interaction with substrate tRNA region.

This sequence belongs to the IPP transferase family. In terms of assembly, monomer. The cofactor is Mg(2+).

It catalyses the reaction adenosine(37) in tRNA + dimethylallyl diphosphate = N(6)-dimethylallyladenosine(37) in tRNA + diphosphate. In terms of biological role, catalyzes the transfer of a dimethylallyl group onto the adenine at position 37 in tRNAs that read codons beginning with uridine, leading to the formation of N6-(dimethylallyl)adenosine (i(6)A). The chain is tRNA dimethylallyltransferase from Picosynechococcus sp. (strain ATCC 27264 / PCC 7002 / PR-6) (Agmenellum quadruplicatum).